A 904-amino-acid chain; its full sequence is Transcription factor E2F7 (904 aa).

The disordered stretch occupies residues 61 to 80 (TPDRNPITPVKPVDRQPQVE). Ser-96 bears the Phosphoserine mark. Residues 143–212 (RKQKSLGLLC…VAKNQYGWHG (70 aa)) mediate DNA binding. Residues 252-269 (GERRKDGSPDPRDPHLLD) show a composition bias toward basic and acidic residues. Residues 252-283 (GERRKDGSPDPRDPHLLDFSEADYPSSSANSR) form a disordered region. A DNA-binding region spans residues 283 to 368 (RKDKSLRIMS…GRKPAFKWIG (86 aa)). Ser-411 carries the post-translational modification Phosphoserine. A disordered region spans residues 560-628 (LSPESRSEED…VMPKKPSSST (69 aa)). Phosphoserine is present on Ser-833. The segment at 846–904 (AEQSPAPATPKSIQRRHRETFFKTPGSLGDPVFRRKERNQSRNTSSAQRRLEISSSGPD) is disordered. The segment covering 886-904 (SRNTSSAQRRLEISSSGPD) has biased composition (polar residues).

This sequence belongs to the E2F/DP family. Interacts with HIF1A. Homodimer and heterodimer: mainly forms homodimers and, to a lesser extent, heterodimers with E2F8. Dimerization is important for DNA-binding. Interacts with MN1. As to expression, widely expressed with highest levels in skin and thymus and very low levels in brain, muscle and stomach. Expressed in trophoblast giant cells throughout placenta development (at protein level).

Its subcellular location is the nucleus. Functionally, atypical E2F transcription factor that participates in various processes such as angiogenesis, polyploidization of specialized cells and DNA damage response. Mainly acts as a transcription repressor that binds DNA independently of DP proteins and specifically recognizes the E2 recognition site 5'-TTTC[CG]CGC-3'. Directly represses transcription of classical E2F transcription factors such as E2F1. Acts as a regulator of S-phase by recognizing and binding the E2-related site 5'-TTCCCGCC-3' and mediating repression of G1/S-regulated genes. Plays a key role in polyploidization of cells in placenta and liver by regulating the endocycle, probably by repressing genes promoting cytokinesis and antagonizing action of classical E2F proteins (E2F1, E2F2 and/or E2F3). Required for placental development by promoting polyploidization of trophoblast giant cells. Also involved in DNA damage response: up-regulated by p53/TP53 following genotoxic stress and acts as a downstream effector of p53/TP53-dependent repression by mediating repression of indirect p53/TP53 target genes involved in DNA replication. Acts as a promoter of sprouting angiogenesis, possibly by acting as a transcription activator: associates with HIF1A, recognizes and binds the VEGFA promoter, which is different from canonical E2 recognition site, and activates expression of the VEGFA gene. Acts as a negative regulator of keratinocyte differentiation. In Mus musculus (Mouse), this protein is Transcription factor E2F7 (E2f7).